Consider the following 428-residue polypeptide: Adenylosuccinate synthetase (428 aa).

Residues 12–18 (GDEGKGK) and 40–42 (GHT) each bind GTP. Aspartate 13 functions as the Proton acceptor in the catalytic mechanism. Residues aspartate 13 and glycine 40 each contribute to the Mg(2+) site. IMP is bound by residues 13-16 (DEGK), 38-41 (NAGH), threonine 128, arginine 142, glutamine 222, threonine 237, and arginine 301. The Proton donor role is filled by histidine 41. Residue 297–303 (VNTGRAR) participates in substrate binding. Residues arginine 303, 329–331 (KLD), and 411–413 (STS) each bind GTP.

This sequence belongs to the adenylosuccinate synthetase family. Homodimer. The cofactor is Mg(2+).

The protein resides in the cytoplasm. It catalyses the reaction IMP + L-aspartate + GTP = N(6)-(1,2-dicarboxyethyl)-AMP + GDP + phosphate + 2 H(+). The protein operates within purine metabolism; AMP biosynthesis via de novo pathway; AMP from IMP: step 1/2. In terms of biological role, plays an important role in the de novo pathway of purine nucleotide biosynthesis. Catalyzes the first committed step in the biosynthesis of AMP from IMP. The sequence is that of Adenylosuccinate synthetase from Caulobacter vibrioides (strain ATCC 19089 / CIP 103742 / CB 15) (Caulobacter crescentus).